Here is a 522-residue protein sequence, read N- to C-terminus: U4/U6 small nuclear ribonucleoprotein Prp4 (522 aa).

The segment covering 1-13 (MASSRASSTQATK) has biased composition (polar residues). The disordered stretch occupies residues 1 to 20 (MASSRASSTQATKTKAPDDL). At Lys-27 the chain carries N6-acetyllysine. WD repeat units follow at residues 229 to 268 (GDDRPISYCHFSPNSKMLATACWSGLCKLWSVPDCNLLHT), 271 to 318 (GHNT…PVAD), 321 to 360 (GHTVRVARVMWHPSGRFLGTTCYDRSWRLWDLEAQEEILH), 363 to 402 (GHSMGVYDIAFHQDGSLAGTGGLDAFGRVWDLRTGRCIMF), 405 to 444 (GHLKEIYGINFSPNGYHIATGSGDNTCKVWDLRQRRCVYT), 447 to 487 (AHQN…PLKT), and 490 to 521 (GHEGKVMGLDISSDGQLIATCSYDRTFKLWMA).

As to quaternary structure, component of the precatalytic spliceosome (spliceosome B complex). Component of the U4/U6-U5 tri-snRNP complex, a building block of the precatalytic spliceosome (spliceosome B complex). The U4/U6-U5 tri-snRNP complex is composed of the U4, U6 and U5 snRNAs and at least PRPF3, PRPF4, PRPF6, PRPF8, PRPF31, SNRNP200, TXNL4A, SNRNP40, SNRPB, SNRPD1, SNRPD2, SNRPD3, SNRPE, SNRPF, SNRPG, DDX23, CD2BP2, PPIH, SNU13, EFTUD2, SART1 and USP39, plus LSM2, LSM3, LSM4, LSM5, LSM6, LSM7 and LSM8. Interacts directly with PRPF18, PPIH and PRPF3. Part of a heteromeric complex containing PPIH, PRPF3 and PRPF4 that is stable in the absence of RNA. Interacts with ERCC6.

The protein localises to the nucleus. It is found in the nucleus speckle. Its function is as follows. Plays a role in pre-mRNA splicing as component of the U4/U6-U5 tri-snRNP complex that is involved in spliceosome assembly, and as component of the precatalytic spliceosome (spliceosome B complex). The polypeptide is U4/U6 small nuclear ribonucleoprotein Prp4 (PRPF4) (Homo sapiens (Human)).